The primary structure comprises 297 residues: Bifunctional protein FolD (297 aa).

Residues 168–170 (GRS), Thr197, and Val238 contribute to the NADP(+) site.

This sequence belongs to the tetrahydrofolate dehydrogenase/cyclohydrolase family. Homodimer.

It catalyses the reaction (6R)-5,10-methylene-5,6,7,8-tetrahydrofolate + NADP(+) = (6R)-5,10-methenyltetrahydrofolate + NADPH. It carries out the reaction (6R)-5,10-methenyltetrahydrofolate + H2O = (6R)-10-formyltetrahydrofolate + H(+). It participates in one-carbon metabolism; tetrahydrofolate interconversion. In terms of biological role, catalyzes the oxidation of 5,10-methylenetetrahydrofolate to 5,10-methenyltetrahydrofolate and then the hydrolysis of 5,10-methenyltetrahydrofolate to 10-formyltetrahydrofolate. In Lawsonia intracellularis (strain PHE/MN1-00), this protein is Bifunctional protein FolD.